The chain runs to 118 residues: Small ribosomal subunit protein uS13 (118 aa).

Residues 94–118 (SLPLRGQRTKTNARTRKGPRKPIKR) are disordered.

Belongs to the universal ribosomal protein uS13 family. As to quaternary structure, part of the 30S ribosomal subunit. Forms a loose heterodimer with protein S19. Forms two bridges to the 50S subunit in the 70S ribosome.

Located at the top of the head of the 30S subunit, it contacts several helices of the 16S rRNA. In the 70S ribosome it contacts the 23S rRNA (bridge B1a) and protein L5 of the 50S subunit (bridge B1b), connecting the 2 subunits; these bridges are implicated in subunit movement. Contacts the tRNAs in the A and P-sites. This chain is Small ribosomal subunit protein uS13, found in Photobacterium profundum (strain SS9).